Reading from the N-terminus, the 974-residue chain is MAARWSSENVVVEFRDSQATAMSVDCLGQHAVLSGRRFLYIVNLDAPFEGHRKISRQSKWDIGAVQWNPHDSFAHYFAASSNQRVDLYKWKDGSGEVGTTLQGHTRVISDLDWAVFEPDLLVTSSVDTYIYIWDIKDTRKPTVALSAVAGASQVKWNKKNANCLATSHDGDVRIWDKRKPSTAVEYLAAHLSKIHGLDWHPDSEHILATSSQDNSVKFWDYRQPRKYLNILPCQVPVWKARYTPFSNGLVTVMVPQLRRENSLLLWNVFDLNTPVHTFVGHDDVVLEFQWRKQKEGSKDYQLVTWSRDQTLRMWRVDSQMQRLCANDILDGVDEFIESISLLPEPEKTLHTEDTDHQHTASHGEEEALKEDPPRNLLEERKSDQLGLPQTLQQEFSLINVQIRNVNVEMDAADRSCTVSVHCSNHRVKMLVKFPAQYPNNAAPSFQFINPTTITSTMKAKLLKILKDTALQKVKRGQSCLEPCLRQLVSCLESFVNQEDSASSNPFALPNSVTPPLPTFARVTTAYGSYQDANIPFPRTSGARFCGAGYLVYFTRPMTMHRAVSPTEPTPRSLSALSAYHTGLIAPMKIRTEAPGNLRLYSGSPTRSEKEQVSISSFYYKERKSRRWKSKREGSDSGNRQIKAAGKVIIQDIACLLPVHKSLGELYILNVNDIQETCQKNAASALLVGRKDLVQVWSLATVATDLCLGPKSDPDLETPWARHPFGRQLLESLLAHYCRLRDVQTLAMLCSVFEAQSRPQGLPNPFGPFPNRSSNLVVSHSRYPSFTSSGSCSSMSDPGLNTGGWNIAGREAEHLSSPWGESSPEELRFGSLTYSDPRERERDQHDKNKRLLDPANTQQFDDFKKCYGEILYRWGLREKRAEVLKFVSCPPDPHKGIEFGVYCSHCRSEVRGTQCAICKGFTFQCAICHVAVRGSSNFCLTCGHGGHTSHMMEWFRTQEVCPTGCGCHCLLESTF.

WD repeat units lie at residues Gln57–Gly98, Gly103–Val143, Ser146–Glu185, Ala189–Asn229, Pro232–His276, Phe278–Ser318, and Gln319–His362. The disordered stretch occupies residues His350 to Arg374. One can recognise an RWD domain in the interval Gln393–Phe494. Position 564 is a phosphoserine (Ser564). One copy of the WD 8 repeat lies at Leu668–Cys706. Residues Ser821, Ser822, and Ser830 each carry the phosphoserine modification. Residues Leu831–Asp852 are disordered. Residues Asp835 to Leu851 show a composition bias toward basic and acidic residues. Residues Tyr901–Phe920 form a C4-type zinc finger. Cys902, Cys905, Cys914, Cys917, Cys927, Cys938, His943, His946, His949, Cys960, Cys964, Cys966, and Cys968 together coordinate Zn(2+). An RING-type; atypical zinc finger spans residues Thr921–Thr973.

The protein belongs to the WD repeat WDR59 family. Component of the GATOR2 subcomplex, composed of MIOS, SEC13, SEH1L, WDR24 and WDR59. The GATOR2 complex interacts with CASTOR1 and CASTOR2; the interaction is negatively regulated by arginine. The GATOR2 complex interacts with SESN1, SESN2 and SESN3; the interaction is negatively regulated by amino acids. Interacts with DDB1-CUL4A/B E3 ligase complexes.

The protein resides in the lysosome membrane. With respect to regulation, the GATOR2 complex is negatively regulated by the upstream amino acid sensors CASTOR1 and SESN2, which sequester the GATOR2 complex in absence of amino acids. In the presence of abundant amino acids, GATOR2 is released from CASTOR1 and SESN2 and activated. Functionally, as a component of the GATOR2 complex, functions as an activator of the amino acid-sensing branch of the mTORC1 signaling pathway. The GATOR2 complex indirectly activates mTORC1 through the inhibition of the GATOR1 subcomplex. GATOR2 probably acts as an E3 ubiquitin-protein ligase toward GATOR1. In the presence of abundant amino acids, the GATOR2 complex mediates ubiquitination of the NPRL2 core component of the GATOR1 complex, leading to GATOR1 inactivation. In the absence of amino acids, GATOR2 is inhibited, activating the GATOR1 complex. In Homo sapiens (Human), this protein is GATOR2 complex protein WDR59.